The primary structure comprises 242 residues: 3-dehydroquinate dehydratase (242 aa).

Residues 39 to 41 (EIR) and R73 contribute to the 3-dehydroquinate site. The Proton donor/acceptor role is filled by H135. The active-site Schiff-base intermediate with substrate is the K162. 2 residues coordinate 3-dehydroquinate: R203 and Q228.

This sequence belongs to the type-I 3-dehydroquinase family. In terms of assembly, homodimer.

It carries out the reaction 3-dehydroquinate = 3-dehydroshikimate + H2O. It functions in the pathway metabolic intermediate biosynthesis; chorismate biosynthesis; chorismate from D-erythrose 4-phosphate and phosphoenolpyruvate: step 3/7. In terms of biological role, involved in the third step of the chorismate pathway, which leads to the biosynthesis of aromatic amino acids. Catalyzes the cis-dehydration of 3-dehydroquinate (DHQ) and introduces the first double bond of the aromatic ring to yield 3-dehydroshikimate. The polypeptide is 3-dehydroquinate dehydratase (Methanosarcina mazei (strain ATCC BAA-159 / DSM 3647 / Goe1 / Go1 / JCM 11833 / OCM 88) (Methanosarcina frisia)).